The following is a 703-amino-acid chain: Polyribonucleotide nucleotidyltransferase (703 aa).

Positions 482 and 488 each coordinate Mg(2+). Residues 549-607 (PKAQVMKIPEDKVGLVIGPAGKNIKYIKEQFGASVWIDGANAYINAPTIEAVNKAADFI) form the KH domain. The region spanning 617-679 (GGVYEGKVIR…EQNRLNLCSP (63 aa)) is the S1 motif domain. A disordered region spans residues 677–703 (CSPDYQKPENQERPRKEQLNRKPHHRK). A compositionally biased stretch (basic and acidic residues) spans 682–696 (QKPENQERPRKEQLN).

The protein belongs to the polyribonucleotide nucleotidyltransferase family. Requires Mg(2+) as cofactor.

The protein resides in the cytoplasm. The enzyme catalyses RNA(n+1) + phosphate = RNA(n) + a ribonucleoside 5'-diphosphate. Its function is as follows. Involved in mRNA degradation. Catalyzes the phosphorolysis of single-stranded polyribonucleotides processively in the 3'- to 5'-direction. This is Polyribonucleotide nucleotidyltransferase from Hydrogenobaculum sp. (strain Y04AAS1).